Here is a 986-residue protein sequence, read N- to C-terminus: Epidermin biosynthesis protein EpiB (986 aa).

To B.subtilis SpaB and L.lactis NisB.

The protein resides in the cell membrane. Involved in the post-translational modification of the lantibiotic epidermin. This chain is Epidermin biosynthesis protein EpiB (epiB), found in Staphylococcus epidermidis.